The primary structure comprises 397 residues: E3 ubiquitin-protein ligase RNF149 (397 aa).

A signal peptide spans 1–20; the sequence is MLRWLCLYSALCALTHGSSA. The segment covering 39–49 has biased composition (polar residues); sequence TNSSVTGSTES. Residues 39-60 form a disordered region; it reads TNSSVTGSTESGRYGDSSPKES. Asparagine 40 and asparagine 140 each carry an N-linked (GlcNAc...) asparagine glycan. The region spanning 83–170 is the PA domain; it reads YIVPGTSAAA…PKGMEIMEPL (88 aa). Residues 196–216 form a helical membrane-spanning segment; that stretch reads VVFVAIAFITMMIISLAWLIF. Asparagine 231 carries an N-linked (GlcNAc...) asparagine glycan. The segment at 264–305 adopts an RING-type; atypical zinc-finger fold; it reads CAVCIENYKTKDLVRILPCKHIFHRLCIDPWLIEHRTCPMCK. The tract at residues 341 to 397 is disordered; the sequence is SITQEESRSEGNNLPSSSTGSSLQQSNSVKDDAGETTALLDDPGNDNAAATHTQDSH. Over residues 351–368 the composition is skewed to low complexity; it reads GNNLPSSSTGSSLQQSNS. The segment covering 388 to 397 has biased composition (polar residues); the sequence is AAATHTQDSH.

Its subcellular location is the membrane. It carries out the reaction S-ubiquitinyl-[E2 ubiquitin-conjugating enzyme]-L-cysteine + [acceptor protein]-L-lysine = [E2 ubiquitin-conjugating enzyme]-L-cysteine + N(6)-ubiquitinyl-[acceptor protein]-L-lysine.. The protein operates within protein modification; protein ubiquitination. In terms of biological role, E3 ubiquitin-protein ligase. Ubiquitinates BRAF, inducing its proteasomal degradation. This is E3 ubiquitin-protein ligase RNF149 (rnf149) from Xenopus laevis (African clawed frog).